Reading from the N-terminus, the 1088-residue chain is Tyrocidine synthase 1 (1088 aa).

Positions 528-602 (PPRTETESIL…QVALFVKSTT (75 aa)) constitute a Carrier domain. Ser563 is modified (O-(pantetheine 4'-phosphoryl)serine).

It belongs to the ATP-dependent AMP-binding enzyme family. As to quaternary structure, large multienzyme complex of TycA, TycB and TycC. Requires pantetheine 4'-phosphate as cofactor.

It carries out the reaction L-phenylalanine + ATP + H2O = D-phenylalanine + AMP + diphosphate + H(+). It functions in the pathway antibiotic biosynthesis; tyrocidine biosynthesis. In the first step of peptide synthesis this enzyme activates phenylalanine and racemizes it to the D-isomer. This chain is Tyrocidine synthase 1 (tycA), found in Brevibacillus parabrevis.